Here is a 367-residue protein sequence, read N- to C-terminus: tRNA-specific 2-thiouridylase MnmA (367 aa).

ATP is bound by residues 13-20 and Met-39; that span reads GLSGGVDS. The segment at 99 to 101 is interaction with target base in tRNA; sequence NPD. Cys-104 functions as the Nucleophile in the catalytic mechanism. Cys-104 and Cys-200 are disulfide-bonded. An ATP-binding site is contributed by Gly-128. An interaction with tRNA region spans residues 150 to 152; the sequence is KDQ. The active-site Cysteine persulfide intermediate is the Cys-200. The interval 307-308 is interaction with tRNA; it reads RY.

Belongs to the MnmA/TRMU family.

Its subcellular location is the cytoplasm. It carries out the reaction S-sulfanyl-L-cysteinyl-[protein] + uridine(34) in tRNA + AH2 + ATP = 2-thiouridine(34) in tRNA + L-cysteinyl-[protein] + A + AMP + diphosphate + H(+). Functionally, catalyzes the 2-thiolation of uridine at the wobble position (U34) of tRNA, leading to the formation of s(2)U34. This is tRNA-specific 2-thiouridylase MnmA from Neisseria meningitidis serogroup A / serotype 4A (strain DSM 15465 / Z2491).